The primary structure comprises 120 residues: Non-specific lipid-transfer protein (120 aa).

The signal sequence occupies residues 1–26 (MGVLRSSFVAMMVMYMVLATTPNAEA). 4 cysteine pairs are disulfide-bonded: Cys30-Cys79, Cys40-Cys56, Cys57-Cys102, and Cys77-Cys116.

Belongs to the plant LTP family. As to expression, expressed in protoderm cells of somatic and zygotic embryos, and transiently expressed in epidermal cell layers of leaves, flowers and seeds.

Plant non-specific lipid-transfer proteins transfer phospholipids as well as galactolipids across membranes. May play a role in wax or cutin deposition in the cell walls of expanding epidermal cells and certain secretory tissues. The protein is Non-specific lipid-transfer protein (EP2) of Daucus carota (Wild carrot).